The primary structure comprises 395 residues: Beta-1,4-galactosyltransferase 3 (395 aa).

At 1 to 10 (MLRRLLERPC) the chain is on the cytoplasmic side. The chain crosses the membrane as a helical; Signal-anchor for type II membrane protein span at residues 11–31 (TLALLVGSQLAVMMYLSLGGF). The Lumenal portion of the chain corresponds to 32-395 (RSLSALFGRD…ANHTAPHGSH (364 aa)). N-linked (GlcNAc...) asparagine glycosylation occurs at asparagine 57. Cysteines 79 and 121 form a disulfide. UDP-alpha-D-galactose contacts are provided by residues 132-136 (PHRAR), 171-173 (FNR), 198-199 (VD), tyrosine 228, and tryptophan 260. An intrachain disulfide couples cysteine 192 to cysteine 211. A Mn(2+)-binding site is contributed by aspartate 199. 262-265 (GEDD) provides a ligand contact to N-acetyl-D-glucosamine. Histidine 293 serves as a coordination point for Mn(2+). UDP-alpha-D-galactose is bound at residue 293–295 (HRG). Position 305 (arginine 305) interacts with N-acetyl-D-glucosamine. Residues asparagine 339 and asparagine 387 are each glycosylated (N-linked (GlcNAc...) asparagine). Residues 341 to 395 (TADIGTDPRGPRAPSGPRYPPGSSQAFRQEMLQRRPPARPGPLPTANHTAPHGSH) form a disordered region.

It belongs to the glycosyltransferase 7 family. It depends on Mn(2+) as a cofactor.

Its subcellular location is the golgi apparatus. It localises to the golgi stack membrane. It carries out the reaction an N-acetyl-beta-D-glucosaminyl derivative + UDP-alpha-D-galactose = a beta-D-galactosyl-(1-&gt;4)-N-acetyl-beta-D-glucosaminyl derivative + UDP + H(+). It catalyses the reaction N-acetyl-D-glucosamine + UDP-alpha-D-galactose = beta-D-galactosyl-(1-&gt;4)-N-acetyl-D-glucosamine + UDP + H(+). The enzyme catalyses a beta-D-GlcNAc-(1-&gt;3)-beta-D-Gal-(1-&gt;4)-beta-D-Glc-(1&lt;-&gt;1)-Cer(d18:1(4E)) + UDP-alpha-D-galactose = a neolactoside nLc4Cer(d18:1(4E)) + UDP + H(+). The catalysed reaction is a beta-D-glucosylceramide + UDP-alpha-D-galactose = a beta-D-galactosyl-(1-&gt;4)-beta-D-glucosyl-(1&lt;-&gt;1)-ceramide + UDP + H(+). It carries out the reaction a neolactoside IV(3)-beta-GlcNAc-nLc4Cer + UDP-alpha-D-galactose = a neolactoside nLc6Cer + UDP + H(+). The protein operates within protein modification; protein glycosylation. Its function is as follows. Responsible for the synthesis of complex-type N-linked oligosaccharides in many glycoproteins as well as the carbohydrate moieties of glycolipids. The protein is Beta-1,4-galactosyltransferase 3 (B4GALT3) of Cricetulus griseus (Chinese hamster).